The following is a 188-amino-acid chain: Elongation factor P (188 aa).

This sequence belongs to the elongation factor P family.

Its subcellular location is the cytoplasm. It functions in the pathway protein biosynthesis; polypeptide chain elongation. In terms of biological role, involved in peptide bond synthesis. Stimulates efficient translation and peptide-bond synthesis on native or reconstituted 70S ribosomes in vitro. Probably functions indirectly by altering the affinity of the ribosome for aminoacyl-tRNA, thus increasing their reactivity as acceptors for peptidyl transferase. The polypeptide is Elongation factor P (Sulfurovum sp. (strain NBC37-1)).